The primary structure comprises 160 residues: SsrA-binding protein (160 aa).

Residues 133–160 form a disordered region; that stretch reads KKLHDKRETEKERDWNRQKSRLLKGNSQ. The span at 137–149 shows a compositional bias: basic and acidic residues; that stretch reads DKRETEKERDWNR.

Belongs to the SmpB family.

It localises to the cytoplasm. In terms of biological role, required for rescue of stalled ribosomes mediated by trans-translation. Binds to transfer-messenger RNA (tmRNA), required for stable association of tmRNA with ribosomes. tmRNA and SmpB together mimic tRNA shape, replacing the anticodon stem-loop with SmpB. tmRNA is encoded by the ssrA gene; the 2 termini fold to resemble tRNA(Ala) and it encodes a 'tag peptide', a short internal open reading frame. During trans-translation Ala-aminoacylated tmRNA acts like a tRNA, entering the A-site of stalled ribosomes, displacing the stalled mRNA. The ribosome then switches to translate the ORF on the tmRNA; the nascent peptide is terminated with the 'tag peptide' encoded by the tmRNA and targeted for degradation. The ribosome is freed to recommence translation, which seems to be the essential function of trans-translation. This chain is SsrA-binding protein, found in Agrobacterium fabrum (strain C58 / ATCC 33970) (Agrobacterium tumefaciens (strain C58)).